We begin with the raw amino-acid sequence, 106 residues long: UPF0145 protein VC_A0951 (106 aa).

The protein belongs to the UPF0145 family.

The sequence is that of UPF0145 protein VC_A0951 from Vibrio cholerae serotype O1 (strain ATCC 39315 / El Tor Inaba N16961).